Consider the following 504-residue polypeptide: Protein Dok-7 (504 aa).

The PH domain occupies 4–109; that stretch reads AALVEGQVKL…WDARIRYALG (106 aa). In terms of domain architecture, IRS-type PTB spans 105–210; it reads RYALGEVHRF…RGISPTKGPF (106 aa). Disordered stretches follow at residues 210–229, 249–351, and 411–483; these read FGLR…TVEE, SHAG…YSSS, and LCLA…PHAG. Low complexity-rich tracts occupy residues 263–279 and 288–310; these read LSSS…SASS and SSSS…AGEA. The segment covering 331–341 has biased composition (polar residues); the sequence is GRQSSSDSGIA.

As to quaternary structure, homodimer. Forms a heterotetramer composed of 2 DOK7 and 2 MUSK molecules which facilitates MUSK trans-autophosphorylation on tyrosine residue and activation. Interacts (via IRS-type PTB domain) with MUSK (via cytoplasmic part); requires MUSK phosphorylation. Preferentially expressed in skeletal muscle and heart. Present in thigh muscle, diaphragm and heart but not in the liver or spleen (at protein level).

The protein localises to the cell membrane. The protein resides in the synapse. Probable muscle-intrinsic activator of MUSK that plays an essential role in neuromuscular synaptogenesis. Acts in aneural activation of MUSK and subsequent acetylcholine receptor (AchR) clustering in myotubes. Induces autophosphorylation of MUSK. This Homo sapiens (Human) protein is Protein Dok-7 (DOK7).